Here is a 248-residue protein sequence, read N- to C-terminus: Ubiquinone/menaquinone biosynthesis C-methyltransferase UbiE (248 aa).

S-adenosyl-L-methionine is bound by residues S68, D92, and 120–121 (NA).

It belongs to the class I-like SAM-binding methyltransferase superfamily. MenG/UbiE family.

It catalyses the reaction a 2-demethylmenaquinol + S-adenosyl-L-methionine = a menaquinol + S-adenosyl-L-homocysteine + H(+). It carries out the reaction a 2-methoxy-6-(all-trans-polyprenyl)benzene-1,4-diol + S-adenosyl-L-methionine = a 5-methoxy-2-methyl-3-(all-trans-polyprenyl)benzene-1,4-diol + S-adenosyl-L-homocysteine + H(+). It functions in the pathway quinol/quinone metabolism; menaquinone biosynthesis; menaquinol from 1,4-dihydroxy-2-naphthoate: step 2/2. Its pathway is cofactor biosynthesis; ubiquinone biosynthesis. Its function is as follows. Methyltransferase required for the conversion of demethylmenaquinol (DMKH2) to menaquinol (MKH2) and the conversion of 2-polyprenyl-6-methoxy-1,4-benzoquinol (DDMQH2) to 2-polyprenyl-3-methyl-6-methoxy-1,4-benzoquinol (DMQH2). The protein is Ubiquinone/menaquinone biosynthesis C-methyltransferase UbiE of Rickettsia prowazekii (strain Madrid E).